Reading from the N-terminus, the 530-residue chain is Calcium uptake protein 3, mitochondrial (530 aa).

A mitochondrion-targeting transit peptide spans methionine 1 to phenylalanine 43. A disordered region spans residues glycine 92–glycine 115. Positions lysine 232 to lysine 267 constitute an EF-hand 1 domain. Ca(2+)-binding residues include aspartate 245, aspartate 247, asparagine 249, methionine 251, aspartate 253, and glutamate 256. Positions valine 401 to leucine 436 constitute an EF-hand 2; degenerate domain. The 36-residue stretch at phenylalanine 470 to arginine 505 folds into the EF-hand 3 domain. Aspartate 483, aspartate 485, aspartate 487, glutamine 489, and glutamate 494 together coordinate Ca(2+).

It belongs to the MICU1 family. MICU3 subfamily. In terms of assembly, heterodimer; disulfide-linked; heterodimerizes with MICU1. Component of the uniplex complex, composed of MCU, EMRE/SMDT1, MICU1 and MICU3 in a 4:4:1:1 stoichiometry. As to expression, specifically expressed in the central nervous system and skeletal muscle.

The protein resides in the mitochondrion intermembrane space. It is found in the mitochondrion inner membrane. Functionally, tissue-specific calcium sensor of the mitochondrial calcium uniporter (MCU) channel, which specifically regulates MCU channel activity in the central nervous system and skeletal muscle. Senses calcium level via its EF-hand domains: compared to MICU1 and MICU2, MICU3 has a higher affinity for calcium. MICU1 and MICU3 form a disulfide-linked heterodimer that stimulates and inhibits MCU activity, depending on the concentration of calcium. At low calcium levels, MICU1 occludes the pore of the MCU channel, preventing mitochondrial calcium uptake. At higher calcium levels, calcium-binding to MICU1 and MICU3 induces a conformational change that weakens MCU-MICU1 interactions and moves the MICU1-MICU3 heterodimer away from the pore, allowing calcium permeation through the MCU channel. The high calcium affinity of MICU3 lowers the calcium threshold necessary for calcium permeation through the MCU channel. The MICU1-MICU3 heterodimer promotes flexibility of neurotransmission in neuronal cells by enhancing mitochondrial calcium uptake in presynapses. It is also required to increase mitochondrial calcium uptake in skeletal muscle cells, thereby increasing ATP production. The sequence is that of Calcium uptake protein 3, mitochondrial from Homo sapiens (Human).